A 97-amino-acid chain; its full sequence is Small cell adhesion glycoprotein (97 aa).

Over 1 to 36 the chain is Extracellular; the sequence is MNNLPATPSPEELMTTPVFQAPETLSPQAEEASTAL. Residue T7 is glycosylated (O-linked (GalNAc...) threonine). O-linked (GalNAc...) serine glycosylation occurs at S9. O-linked (GalNAc...) threonine glycosylation is found at T15, T16, and T24. S26 is a glycosylation site (O-linked (GalNAc...) serine). The chain crosses the membrane as a helical; Signal-anchor for type III membrane protein span at residues 37 to 57; that stretch reads IAVVITVVFLTLLSVVTLIFF. The Cytoplasmic segment spans residues 58–97; the sequence is HLYKNKGSYVTYEPAEGEPSAILQMETDSAKGREKEEYFI.

This sequence belongs to the SMAGP family. Post-translationally, O-glycosylated. The O-glycan is modified with sialic acid residues.

The protein resides in the cell membrane. Its subcellular location is the cytoplasmic vesicle membrane. In terms of biological role, may play a role in epithelial cell-cell contacts. May play a role in tumor invasiveness and metastasis formation. The sequence is that of Small cell adhesion glycoprotein (Smagp) from Mus musculus (Mouse).